The sequence spans 200 residues: Claudin-11 (200 aa).

Position 1 (methionine 1) is a topological domain, cytoplasmic. Residues 2–22 form a helical membrane-spanning segment; sequence VATCLQVVGFVTSFVGWIGVI. Topologically, residues 23-75 are extracellular; the sequence is VTTSTNDWVVTCGYTIPTCRKLDELGSKGLWADCVMATGLYHCKPLVDILPCR. The chain crosses the membrane as a helical span at residues 76–96; the sequence is ALMIAASVLGLPAILLLLTVL. Residues 97 to 115 are Cytoplasmic-facing; that stretch reads PCIRMGQEPGVAKYRRAQL. A helical membrane pass occupies residues 116-136; it reads AGVLLILLALCAIVATIWFPV. The Extracellular segment spans residues 137–150; the sequence is CAHRETTIVSFGYS. The helical transmembrane segment at 151–171 threads the bilayer; the sequence is LYAGWIGAVLCLVGGCVILCC. Residues 172–200 lie on the Cytoplasmic side of the membrane; the sequence is AGDAQAFGENRFYYTAGSSSPTHAKSAHV. Phosphoserine is present on residues serine 190 and serine 191.

The protein belongs to the claudin family. In terms of assembly, interacts with tetraspanin-3/TSPAN3. Interacts with OCLN.

Its subcellular location is the cell junction. The protein resides in the tight junction. It is found in the cell membrane. Plays a major role in tight junction-specific obliteration of the intercellular space, through calcium-independent cell-adhesion activity. The polypeptide is Claudin-11 (CLDN11) (Pongo abelii (Sumatran orangutan)).